The chain runs to 164 residues: Pyruvoyl-dependent arginine decarboxylase (164 aa).

Position 52 is a pyruvic acid (Ser) (serine 52).

It belongs to the PdaD family. Pyruvate serves as cofactor.

It catalyses the reaction L-arginine + H(+) = agmatine + CO2. This chain is Pyruvoyl-dependent arginine decarboxylase, found in Methanococcus maripaludis (strain C5 / ATCC BAA-1333).